We begin with the raw amino-acid sequence, 91 residues long: Small ribosomal subunit protein uS15 (91 aa).

It belongs to the universal ribosomal protein uS15 family. As to quaternary structure, part of the 30S ribosomal subunit. Forms a bridge to the 50S subunit in the 70S ribosome, contacting the 23S rRNA.

One of the primary rRNA binding proteins, it binds directly to 16S rRNA where it helps nucleate assembly of the platform of the 30S subunit by binding and bridging several RNA helices of the 16S rRNA. Functionally, forms an intersubunit bridge (bridge B4) with the 23S rRNA of the 50S subunit in the ribosome. The sequence is that of Small ribosomal subunit protein uS15 from Legionella pneumophila (strain Corby).